A 615-amino-acid polypeptide reads, in one-letter code: DNA mismatch repair protein MutL (615 aa).

The interval 363–397 is disordered; it reads FAEPAAREPVAPRYTPAPASGSRPAAPWPNAQPGY. The span at 364–391 shows a compositional bias: low complexity; sequence AEPAAREPVAPRYTPAPASGSRPAAPWP.

This sequence belongs to the DNA mismatch repair MutL/HexB family.

In terms of biological role, this protein is involved in the repair of mismatches in DNA. It is required for dam-dependent methyl-directed DNA mismatch repair. May act as a 'molecular matchmaker', a protein that promotes the formation of a stable complex between two or more DNA-binding proteins in an ATP-dependent manner without itself being part of a final effector complex. The protein is DNA mismatch repair protein MutL of Escherichia coli (strain ATCC 8739 / DSM 1576 / NBRC 3972 / NCIMB 8545 / WDCM 00012 / Crooks).